The sequence spans 40 residues: Mu-thomitoxin-Hme1b (40 aa).

Disulfide bonds link C2–C18, C9–C22, and C17–C33.

This sequence belongs to the neurotoxin 19 (CSTX) family. Contains 3 disulfide bonds. Expressed by the venom gland.

It localises to the secreted. In terms of biological role, blocks the Nav1.2/SCN2A, Nav1.4/SCN4A, Nav1.5/SCN5A and Nav1.6/SCN8A sodium channels. Shows a slight preference for the Nav1.2 and Nav1.4 channels. Reduces the peak amplitude of the sodium current and negatively shifts the steady-state inactivation process. Does not shift the threshold potential of activation or the voltage corresponding to maximal current. Does not change the reversal potential of the sodium current. May act on site 1 of the receptor. The protein is Mu-thomitoxin-Hme1b of Heriaeus mellotteei (Crab spider).